Consider the following 267-residue polypeptide: Transcription factor HES-1-A (267 aa).

The tract at residues 1 to 43 (MPADVMEKNSSSPVAATPASVSNTPDKPKTASEHRKSSKPIME) is disordered. The span at 10–22 (SSSPVAATPASVS) shows a compositional bias: low complexity. Positions 26-35 (DKPKTASEHR) are enriched in basic and acidic residues. In terms of domain architecture, bHLH spans 34–91 (HRKSSKPIMEKRRRARINESLGQLKTLILDALKKDSSRHSKLEKADILEMTVKHLRNL). The 34-residue stretch at 110–143 (YRAGFSECMNEVTRFLSTCEGVNTDVRTRLLGHL) folds into the Orange domain. A WRPW motif motif is present at residues 264–267 (WRPW).

As to quaternary structure, transcription repression requires formation of a complex with a corepressor protein of the Groucho/TLE family. Interacts with the bHLH protein hes2, and binds DNA in the form of a heterodimer with the bHLH protein hey1/hrt1. Interacts with the bHLH protein hes6; this interaction may inhibit the transcriptional repressor activity. As to expression, starting from late neurula stage, weakly expressed in midline neural cells, where expression is restricted to the superficial layer of the prospective floorplate. Expressed in the posterior somitic mesoderm (PSM) at tailbud stage. During early tailbud stages, broadly expressed within the pronephric mesoderm both around and inside the developing pronephros. During late tailbud to early tadpole stages, expressed more ventrally in the pronephros, and although initially expressed in both the lateral and medial layers, by these later stages expression is predominantly in the lateral layer. Pronephric expression is no longer detectable in late tadpoles (stage 35).

The protein resides in the nucleus. Transcriptional repressor of a subset of early mesodermal genes including myod1 and t/bra. Binds DNA on N-box motifs: 5'-CACNAG-3'. Acts as a negative regulator of myogenesis, mediating Notch signaling to repress expression of myod1. This chain is Transcription factor HES-1-A (hes1-a), found in Xenopus laevis (African clawed frog).